The following is a 540-amino-acid chain: Receptor-interacting serine/threonine-protein kinase 2 (540 aa).

In terms of domain architecture, Protein kinase spans 18–294 (LADLRYLSRG…KCLIELEPVL (277 aa)). ATP contacts are provided by residues 24–32 (LSRGASGTV) and K47. The interval 65 to 73 (REAEILHKA) is helix alphaC. D146 (proton acceptor) is an active-site residue. Positions 167 to 193 (LSKWRMMSLSQSRSSKSAPEGGTIVYM) are activation segment (AS). S168 carries the post-translational modification Phosphoserine. The residue at position 174 (S174) is a Phosphoserine; alternate. S176 is modified (phosphoserine; by autocatalysis). Residue S178 is modified to Phosphoserine; alternate. Position 180 is a phosphoserine (S180). S181 bears the Phosphoserine; alternate mark. K209 is covalently cross-linked (Glycyl lysine isopeptide (Lys-Gly) (interchain with G-Cter in ubiquitin)). The segment at 318–367 (SRTVHLSDKKKRELSPNIPVNSGPREESCGSSQLHKTSGSPGTSRSLSAP) is disordered. Positions 322 to 331 (HLSDKKKREL) are enriched in basic and acidic residues. Over residues 346–366 (CGSSQLHKTSGSPGTSRSLSA) the composition is skewed to polar residues. S363 and S391 each carry phosphoserine. In terms of domain architecture, CARD spans 432-524 (GIAQQWIQSK…LQPYPEILVL (93 aa)). The residue at position 472 (Y472) is a Phosphotyrosine; by autocatalysis. 3 positions are modified to phosphoserine: S525, S527, and S529. A Glycyl lysine isopeptide (Lys-Gly) (interchain with G-Cter in ubiquitin) cross-link involves residue K536. S537 is modified (phosphoserine).

The protein belongs to the protein kinase superfamily. TKL Ser/Thr protein kinase family. As to quaternary structure, interacts (via CARD domain) with NOD2 (via CARD domain). Interacts (via CARD domain) with NOD1 (via CARD domain). Homooligomer; following interaction with NOD1 or NOD2, homooligomerizes via its CARD domain and forms long filaments named RIPosomes. Found in a signaling complex consisting of at least ARHGEF2, NOD2 and RIPK2. Interacts with ARHGEF2; the interaction mediates tyrosine phosphorylation of RIPK2 by Src kinase CSK. Interacts with MAP3K4; this interaction sequesters RIPK2 from the NOD2 signaling pathway. Interacts with IKBKG/NEMO. The polyubiquitinated protein interacts with MAP3K7/TAK1; interaction is indirect and is mediated by TAB2 and TAB3 that bind to polyubiquitin chains attached to RIPK2. Binds to CFLAR/CLARP and CASP1 via their CARD domains. Binds to BIRC3/c-IAP1 and BIRC2/c-IAP2, TRAF1, TRAF2, TRAF5 and TRAF6. Interacts with NLRP10. Interacts with CARD9. Interacts with INAVA; the interaction takes place upon PRR stimulation. Interacts (via CARD domain) with NGFR (via death domain). Interacts with IRGM; promoting RIPK2 degradation. Post-translationally, polyubiquitinated via both 'Lys-63'- and 'Met-1'-linked polyubiquitin following recruitment by NOD1 or NOD2, creating docking sites for downstream effectors, triggering activation of the NF-kappa-B and MAP kinases signaling. 'Lys-63'-linked polyubiquitination by XIAP is essential for NOD2 signaling and promotes recruitment of the LUBAC complex. Also polyubiquitinated with 'Lys-63'-linked chains by PELI3, BIRC2/c-IAP1 and BIRC3/c-IAP2. Ubiquitinated on Lys-209 via 'Lys-63'-linked by ITCH. Undergoes 'Lys-63'-linked deubiquitination by MYSM1 to attenuate NOD2-mediated inflammation and tissue damage. Polyubiquitinated with 'Lys-63'-linked chains in response to Shigella infection, promoting its SQSTM1/p62-dependent autophagic degradation. Undergoes 'Met-1'-linked polyubiquitination; the head-to-tail linear polyubiquitination is mediated by the LUBAC complex in response to NOD2 stimulation 'Met-1'-linked polyubiquitination. 'Lys-63'-linked polyubiquitination by XIAP is required for recruimtent of the LUBAC complex and subsequent. Linear polyubiquitination is restricted by FAM105B/otulin, probably to limit NOD2-dependent pro-inflammatory signaling activation of NF-kappa-B. Autophosphorylated. Phosphorylated at Ser-176, either via autophosphorylation or by LRRK2, enhancing activity. Autophosphorylation at Tyr-472 is required for effective NOD2 signaling. Autophosphorylation is however not essential for NOD2 signaling. In terms of processing, degraded via selective autophagy following interaction with IRGM. IRGM promotes NOD1/NOD2-RIPK2 RIPosome recruitment to autophagosome membranes. RIPK2 biquitinated via 'Lys-63'-linked chains is then recognized by SQSTM1/p62, leading to the SQSTM1/p62-dependent autophagic degradation of the NOD1/NOD2-RIPK2 RIPosome.

It is found in the cytoplasm. It localises to the cell membrane. Its subcellular location is the endoplasmic reticulum. The enzyme catalyses L-seryl-[protein] + ATP = O-phospho-L-seryl-[protein] + ADP + H(+). The catalysed reaction is L-threonyl-[protein] + ATP = O-phospho-L-threonyl-[protein] + ADP + H(+). It catalyses the reaction L-tyrosyl-[protein] + ATP = O-phospho-L-tyrosyl-[protein] + ADP + H(+). In the inactive state, the helix alphaC is packed against the helical, non-phosphorylated activation segment (AS). Upon activation, helix alphaC is displaced and the phosphorylated AS becomes disordered. Functionally, serine/threonine/tyrosine-protein kinase that plays an essential role in modulation of innate and adaptive immune responses. Acts as a key effector of NOD1 and NOD2 signaling pathways: upon activation by bacterial peptidoglycans, NOD1 and NOD2 oligomerize and recruit RIPK2 via CARD-CARD domains, leading to the formation of RIPK2 filaments. Once recruited, RIPK2 autophosphorylates and undergoes 'Lys-63'-linked polyubiquitination by E3 ubiquitin ligases XIAP, BIRC2 and BIRC3, as well as 'Met-1'-linked (linear) polyubiquitination by the LUBAC complex, becoming a scaffolding protein for downstream effectors. 'Met-1'-linked polyubiquitin chains attached to RIPK2 recruit IKBKG/NEMO, which undergoes 'Lys-63'-linked polyubiquitination in a RIPK2-dependent process. 'Lys-63'-linked polyubiquitin chains attached to RIPK2 serve as docking sites for TAB2 and TAB3 and mediate the recruitment of MAP3K7/TAK1 to IKBKG/NEMO, inducing subsequent activation of IKBKB/IKKB. In turn, NF-kappa-B is released from NF-kappa-B inhibitors and translocates into the nucleus where it activates the transcription of hundreds of genes involved in immune response, growth control, or protection against apoptosis. The protein kinase activity is dispensable for the NOD1 and NOD2 signaling pathways. Contributes to the tyrosine phosphorylation of the guanine exchange factor ARHGEF2 through Src tyrosine kinase leading to NF-kappa-B activation by NOD2. Also involved in adaptive immunity: plays a role during engagement of the T-cell receptor (TCR) in promoting BCL10 phosphorylation and subsequent NF-kappa-B activation. Plays a role in the inactivation of RHOA in response to NGFR signaling. The chain is Receptor-interacting serine/threonine-protein kinase 2 (RIPK2) from Bos taurus (Bovine).